Consider the following 438-residue polypeptide: Transposon Ty2-LR2 Gag polyprotein (438 aa).

Polar residues-rich tracts occupy residues 1 to 11 (MESQQLHQNPH), 19 to 39 (ASVTSKEVPSNQDPLAVSASN), and 49 to 60 (KVNSQEETTPGT). Disordered regions lie at residues 1–88 (MESQ…YQQH), 364–397 (KNVSRTSPNTTNTKVTTRNYHRTNSSKPRAAKAH), and 418–438 (VSSQYLSDDNELSLRPATERI). Positions 295-397 (ENNINVSDRL…SSKPRAAKAH (103 aa)) are RNA-binding. A compositionally biased stretch (low complexity) spans 369–381 (TSPNTTNTKVTTR).

In terms of assembly, homotrimer.

It is found in the cytoplasm. Its function is as follows. Capsid protein (CA) is the structural component of the virus-like particle (VLP), forming the shell that encapsulates the retrotransposons dimeric RNA genome. The particles are assembled from trimer-clustered units and there are holes in the capsid shells that allow for the diffusion of macromolecules. CA also has nucleocapsid-like chaperone activity, promoting primer tRNA(i)-Met annealing to the multipartite primer-binding site (PBS), dimerization of Ty2 RNA and initiation of reverse transcription. This chain is Transposon Ty2-LR2 Gag polyprotein (TY2A-LR2), found in Saccharomyces cerevisiae (strain ATCC 204508 / S288c) (Baker's yeast).